Reading from the N-terminus, the 765-residue chain is ATP-dependent zinc metalloprotease FtsH (765 aa).

The Cytoplasmic portion of the chain corresponds to 1–27 (MSNTSNFNERVTENAKPPKNVKSIIWK). A helical membrane pass occupies residues 28 to 48 (TIGIIIVMAIIIGLILFYVLP). Residues 49 to 213 (RNTIANISNI…NVQLPNQSTA (165 aa)) are Extracellular-facing. The chain crosses the membrane as a helical span at residues 214 to 234 (ILTQFLTSIIPFVILIVIYIV). The Cytoplasmic segment spans residues 235-765 (IARRFSRTMG…EPTASTASSN (531 aa)). 314 to 321 (GPPGTGKT) provides a ligand contact to ATP. His536 lines the Zn(2+) pocket. Glu537 is a catalytic residue. Residues His540 and Asp615 each contribute to the Zn(2+) site. Residues 730 to 748 (KAAAEKEEQAEKAKLDHQS) show a composition bias toward basic and acidic residues. Positions 730–765 (KAAAEKEEQAEKAKLDHQSDSAQPQEEPTASTASSN) are disordered. A compositionally biased stretch (polar residues) spans 749 to 765 (DSAQPQEEPTASTASSN).

This sequence in the central section; belongs to the AAA ATPase family. It in the C-terminal section; belongs to the peptidase M41 family. As to quaternary structure, homohexamer. Requires Zn(2+) as cofactor.

The protein resides in the cell membrane. Acts as a processive, ATP-dependent zinc metallopeptidase for both cytoplasmic and membrane proteins. Plays a role in the quality control of integral membrane proteins. The chain is ATP-dependent zinc metalloprotease FtsH from Mycoplasmoides gallisepticum (strain R(high / passage 156)) (Mycoplasma gallisepticum).